Reading from the N-terminus, the 357-residue chain is Heat-inducible transcription repressor HrcA (357 aa).

The protein belongs to the HrcA family.

Negative regulator of class I heat shock genes (grpE-dnaK-dnaJ and groELS operons). Prevents heat-shock induction of these operons. The sequence is that of Heat-inducible transcription repressor HrcA from Chlorobium limicola (strain DSM 245 / NBRC 103803 / 6330).